Reading from the N-terminus, the 1229-residue chain is Alpha,alpha-trehalose-phosphate synthase [UDP-forming] 2 (1229 aa).

Residues 196–233 (VSSDSEGEEAIHNVRSGTHTESESEEDPKAPRSGLATS) form a disordered region. The segment covering 213 to 225 (THTESESEEDPKA) has biased composition (basic and acidic residues).

It in the N-terminal section; belongs to the glycosyltransferase 20 family. The protein in the C-terminal section; belongs to the gob-1 trehalose phosphatase family.

It carries out the reaction D-glucose 6-phosphate + UDP-alpha-D-glucose = alpha,alpha-trehalose 6-phosphate + UDP + H(+). Catalyzes the production of trehalose from glucose-6-phosphate and UDP-alpha-D-glucose in a 2 step process. In Caenorhabditis elegans, this protein is Alpha,alpha-trehalose-phosphate synthase [UDP-forming] 2 (tps-2).